A 248-amino-acid polypeptide reads, in one-letter code: 1-(5-phosphoribosyl)-5-[(5-phosphoribosylamino)methylideneamino] imidazole-4-carboxamide isomerase (248 aa).

Residue Asp-8 is the Proton acceptor of the active site. The Proton donor role is filled by Asp-129.

The protein belongs to the HisA/HisF family.

It is found in the cytoplasm. It catalyses the reaction 1-(5-phospho-beta-D-ribosyl)-5-[(5-phospho-beta-D-ribosylamino)methylideneamino]imidazole-4-carboxamide = 5-[(5-phospho-1-deoxy-D-ribulos-1-ylimino)methylamino]-1-(5-phospho-beta-D-ribosyl)imidazole-4-carboxamide. It functions in the pathway amino-acid biosynthesis; L-histidine biosynthesis; L-histidine from 5-phospho-alpha-D-ribose 1-diphosphate: step 4/9. The polypeptide is 1-(5-phosphoribosyl)-5-[(5-phosphoribosylamino)methylideneamino] imidazole-4-carboxamide isomerase (Rhizobium etli (strain ATCC 51251 / DSM 11541 / JCM 21823 / NBRC 15573 / CFN 42)).